The sequence spans 316 residues: Beta-agarase (316 aa).

Residues 1-18 (MKRKLFTICLASLQFACA) form the signal peptide. A GH16 domain is found at 27 to 315 (YEWDIYPVPA…WIRVYTLVPE (289 aa)). Residues tryptophan 78, 87–97 (QRDHVSVSDGF), and 101–103 (RAS) each bind substrate. Glutamate 167 functions as the Nucleophile in the catalytic mechanism. Glutamate 172 serves as the catalytic Proton donor. Arginine 197 contributes to the substrate binding site.

The protein belongs to the glycosyl hydrolase 16 family.

It catalyses the reaction Hydrolysis of (1-&gt;4)-beta-D-galactosidic linkages in agarose, giving the tetramer as the predominant product.. Cleaves the beta-1,4-linkages between beta-D-galactose and alpha-L-3,6-anhydro-galactose residues in agarose. Cleaves agarose in a random manner with retention of the anomeric-bond configuration, producing beta-anomers that give rise progressively to alpha-anomers when mutarotation takes place. The protein is Beta-agarase of Phocaeicola plebeius (strain DSM 17135 / JCM 12973 / CCUG 54634 / M2) (Bacteroides plebeius).